We begin with the raw amino-acid sequence, 447 residues long: DNA primase DnaG (447 aa).

In terms of domain architecture, Toprim spans 200 to 274; that stretch reads DSIIVVEGRA…DIDYVARAPE (75 aa). Residues E206, D248, and D250 each coordinate Mg(2+).

The protein belongs to the archaeal DnaG primase family. Forms a ternary complex with MCM helicase and DNA. Component of the archaeal exosome complex. Mg(2+) is required as a cofactor.

It carries out the reaction ssDNA + n NTP = ssDNA/pppN(pN)n-1 hybrid + (n-1) diphosphate.. Its function is as follows. RNA polymerase that catalyzes the synthesis of short RNA molecules used as primers for DNA polymerase during DNA replication. Also part of the exosome, which is a complex involved in RNA degradation. Acts as a poly(A)-binding protein that enhances the interaction between heteromeric, adenine-rich transcripts and the exosome. This Pyrococcus abyssi (strain GE5 / Orsay) protein is DNA primase DnaG.